A 112-amino-acid polypeptide reads, in one-letter code: Integration host factor subunit alpha (112 aa).

Belongs to the bacterial histone-like protein family. Heterodimer of an alpha and a beta chain.

Its function is as follows. This protein is one of the two subunits of integration host factor, a specific DNA-binding protein that functions in genetic recombination as well as in transcriptional and translational control. The chain is Integration host factor subunit alpha from Sinorhizobium medicae (strain WSM419) (Ensifer medicae).